Here is a 224-residue protein sequence, read N- to C-terminus: MQIRYLGHSAFEITDGKWNLLIDPFITGNPACPVKAEELHPQYILVTHLHDDHVGDTVAIAKRTGATVITSFEGGQALAAQGVKVADMALGGKRRFDFGLVRVTLAFHGFGPTGGHACGFVIHIGGKRIYHAGDTALFSDMKLLNGVIEEPGIDVAMLPIGDNYTMGPEDAAVAVEWIRPKVVIPMHWGTFPVLVQDASGFAARVRETGASQPVVLRPGETYTL.

It belongs to the UPF0173 family.

The protein is UPF0173 metal-dependent hydrolase STH3160 of Symbiobacterium thermophilum (strain DSM 24528 / JCM 14929 / IAM 14863 / T).